We begin with the raw amino-acid sequence, 796 residues long: Inactive dipeptidyl peptidase 10 (796 aa).

Over 1 to 34 (MNQTASVSHHIKCQPSKTIKELGSNSPPQRNWKG) the chain is Cytoplasmic. The tract at residues 1-55 (MNQTASVSHHIKCQPSKTIKELGSNSPPQRNWKGIAIALLVILVVCSLITMSVIL) is mediates effects on KCND2. Residues 35-55 (IAIALLVILVVCSLITMSVIL) form a helical; Signal-anchor for type II membrane protein membrane-spanning segment. Topologically, residues 56-796 (LTPDELTNSS…VLPQEPEEDE (741 aa)) are extracellular. Asparagine 63, asparagine 90, asparagine 111, and asparagine 119 each carry an N-linked (GlcNAc...) asparagine glycan. Phosphotyrosine occurs at positions 138 and 143. Residues asparagine 257, asparagine 342, and asparagine 748 are each glycosylated (N-linked (GlcNAc...) asparagine).

Belongs to the peptidase S9B family. DPPIV subfamily. May form oligomers. Interacts with KCND1. Interacts with KCND2. Identified in a complex with KCND2 and KCNIP3. N-glycosylation is important for cell surface expression, specially at Asn-257, which is crucial. In terms of tissue distribution, detected in brain cortex, hippocampus, thalamus and cerebellum Purkinje cells (at protein level).

Its subcellular location is the cell membrane. Promotes cell surface expression of the potassium channel KCND2. Modulates the activity and gating characteristics of the potassium channel KCND2. Has no dipeptidyl aminopeptidase activity. The chain is Inactive dipeptidyl peptidase 10 (Dpp10) from Rattus norvegicus (Rat).